The following is a 79-amino-acid chain: Small ribosomal subunit protein bS18 (79 aa).

Belongs to the bacterial ribosomal protein bS18 family. Part of the 30S ribosomal subunit. Forms a tight heterodimer with protein bS6.

Binds as a heterodimer with protein bS6 to the central domain of the 16S rRNA, where it helps stabilize the platform of the 30S subunit. This Onion yellows phytoplasma (strain OY-M) protein is Small ribosomal subunit protein bS18.